A 569-amino-acid chain; its full sequence is MHKKNYMQQLSEQEQIRRDKLTAIRKAGINPYPADLFPVDHTTTGIKENFEEGKNVVIAGRLMSRRIQGKASFAELQDSKGRIQVYFNRDEICTGEDKSKYNDLYKKLLDIGDFIGIEGELFKTQVGEMTVMVKDFHLLSKALRPLPLPKTDKEGNTHDGFNDPEQRYRQRYADLAVNPKVKEIFVKRTKLFNAMRNFFNEREYFEVETPILQSIPGGAAARPFVTHHNALDIPLYLRIANELYLKRLIVGGFDGVYEFSKNFRNEGMDRTHNPEFTAMEIYVAYKDYNWMMEFTEQLLEHCAEAVNGTTDATFGEHKINFKAPYKRLSMTDAIIEYTGFDITGKSEKELYEAAKGMDIEVDDTMGKGKLIDEIFGEKCEGKFIQPTFITDYPKEMSPLCKEHRDNPELTERFELMVCGKEIANAYSELNDPLDQRERFEEQLKLSEKGDDEAMFIDNDFLRSLEYGMPPTSGLGIGMDRLIMFLTNKQSIQEVLFFPQMKPEKKAVELSEEEKEVFKLLKNDSVHELNDIKEQSGLSNKKWDKAVKGLRKHKMIDVFKEGETLNMKIS.

The Mg(2+) site is built by Glu-414 and Glu-421.

This sequence belongs to the class-II aminoacyl-tRNA synthetase family. In terms of assembly, homodimer. It depends on Mg(2+) as a cofactor.

It is found in the cytoplasm. It catalyses the reaction tRNA(Lys) + L-lysine + ATP = L-lysyl-tRNA(Lys) + AMP + diphosphate. This chain is Lysine--tRNA ligase, found in Christiangramia forsetii (strain DSM 17595 / CGMCC 1.15422 / KT0803) (Gramella forsetii).